The sequence spans 425 residues: SWI5-dependent HO expression protein 3 (425 aa).

The segment at 24 to 45 (NLESSPTKDRNTSSQNASSSRV) is disordered. The segment covering 35-45 (TSSQNASSSRV) has biased composition (polar residues). The stretch at 68 to 197 (QNLLSKLELA…LELSNQNLNY (130 aa)) forms a coiled coil. The tract at residues 322–425 (RKTPNTNDSS…NSMVVHGAQS (104 aa)) is disordered. Residues 326–338 (NTNDSSSNGNSSN) are compositionally biased toward low complexity. Serine 343 carries the phosphoserine modification. 2 stretches are compositionally biased toward polar residues: residues 345-358 (YTAS…SIPK) and 382-397 (KTNV…SPTI). Serine 394 carries the phosphoserine modification.

It belongs to the SHE3 family. As to quaternary structure, interacts with SHE2 and MYO4.

The protein resides in the endoplasmic reticulum membrane. Its function is as follows. RNA-binding protein that binds specific mRNAs including the ASH1 mRNA, coding for a repressor of the HO endonuclease. Part of the mRNA localization machinery that restricts accumulation of certain proteins to the bud and in the daughter cell. Required for the delivery of cortical endoplasmic reticulum into the emerging bud. The sequence is that of SWI5-dependent HO expression protein 3 (SHE3) from Saccharomyces cerevisiae (strain ATCC 204508 / S288c) (Baker's yeast).